Reading from the N-terminus, the 101-residue chain is Chaperone modulatory protein CbpM (101 aa).

Belongs to the CbpM family.

Functionally, interacts with CbpA and inhibits both the DnaJ-like co-chaperone activity and the DNA binding activity of CbpA. Together with CbpA, modulates the activity of the DnaK chaperone system. Does not inhibit the co-chaperone activity of DnaJ. The protein is Chaperone modulatory protein CbpM of Pseudomonas entomophila (strain L48).